The following is a 229-amino-acid chain: Glutamine amidotransferase-like class 1 domain-containing protein 1 (229 aa).

The N-terminal stretch at 1-34 is a signal peptide; the sequence is MKKQGAPVSGGGTERLTKPSCLMVGSAVAEGVSA. Residues asparagine 154 and asparagine 212 are each glycosylated (N-linked (GlcNAc...) asparagine).

This sequence belongs to the peptidase C56 family. Homotetramer. Component of the FERRY complex.

Its subcellular location is the secreted. The protein resides in the early endosome. Its function is as follows. Component of the FERRY complex (Five-subunit Endosomal Rab5 and RNA/ribosome intermediary). The FERRY complex directly interacts with mRNAs and RAB5A, and functions as a RAB5A effector involved in the localization and the distribution of specific mRNAs most likely by mediating their endosomal transport. The complex recruits mRNAs and ribosomes to early endosomes through direct mRNA-interaction. The polypeptide is Glutamine amidotransferase-like class 1 domain-containing protein 1 (Xenopus laevis (African clawed frog)).